A 307-amino-acid chain; its full sequence is MNAKVWVLGDAVVDLLPESEGRLLQCPGGAPANVAVGVARLGGNSGFIGAVGGDPFGRYMRHTLQQEQVDVSHMYLDDQHRTSTVVVDLDDQGERTFTFMVRPSADLFLVEEDLPQFAAGQWLHVCSIALSAEPSRSTTFAAMESIRSAGGRVSFDPNIRPDLWQDQALLLACLDRALHMANVVKLSEEELVFISSSNDLAYGIASVTERYQPELLLVTRGKAGVLAAFQQKFTHFNARPVASVDTTGAGDAFVAGLLASLAANGMPTDMTALEPTLTLAQTCGALATTAKGAMTALPYQRDLNRQF.

It belongs to the carbohydrate kinase PfkB family.

The catalysed reaction is D-fructose + ATP = D-fructose 6-phosphate + ADP + H(+). In Salmonella typhimurium, this protein is Fructokinase (scrK).